Here is a 473-residue protein sequence, read N- to C-terminus: Putative amidase AmiC (473 aa).

Catalysis depends on charge relay system residues Lys-82 and Ser-157. Ser-181 serves as the catalytic Acyl-ester intermediate.

It belongs to the amidase family.

The catalysed reaction is a monocarboxylic acid amide + H2O = a monocarboxylate + NH4(+). This Mycobacterium bovis (strain ATCC BAA-935 / AF2122/97) protein is Putative amidase AmiC (amiC).